We begin with the raw amino-acid sequence, 389 residues long: Large ribosomal subunit protein uL3 (389 aa).

Belongs to the universal ribosomal protein uL3 family. Component of the large ribosomal subunit. Mature ribosomes consist of a small (40S) and a large (60S) subunit. The 40S subunit contains about 32 different proteins and 1 molecule of RNA (18S). The 60S subunit contains 45 different proteins and 3 molecules of RNA (25S, 5.8S and 5S).

The protein resides in the cytoplasm. Its function is as follows. Component of the ribosome, a large ribonucleoprotein complex responsible for the synthesis of proteins in the cell. The small ribosomal subunit (SSU) binds messenger RNAs (mRNAs) and translates the encoded message by selecting cognate aminoacyl-transfer RNA (tRNA) molecules. The large subunit (LSU) contains the ribosomal catalytic site termed the peptidyl transferase center (PTC), which catalyzes the formation of peptide bonds, thereby polymerizing the amino acids delivered by tRNAs into a polypeptide chain. The nascent polypeptides leave the ribosome through a tunnel in the LSU and interact with protein factors that function in enzymatic processing, targeting, and the membrane insertion of nascent chains at the exit of the ribosomal tunnel. RPL3 plays a role in coordinating processes of accommodating the aminoacyl-tRNA in the PTC. This is Large ribosomal subunit protein uL3 from Candida albicans (strain SC5314 / ATCC MYA-2876) (Yeast).